Reading from the N-terminus, the 385-residue chain is Spermidine/putrescine import ATP-binding protein PotA (385 aa).

The region spanning 6–238 (IEFKNVSKVF…PINHFVATFI (233 aa)) is the ABC transporter domain. An ATP-binding site is contributed by 40–47 (GSSGSGKS).

Belongs to the ABC transporter superfamily. Spermidine/putrescine importer (TC 3.A.1.11.1) family. The complex is composed of two ATP-binding proteins (PotA), two transmembrane proteins (PotB and PotC) and a solute-binding protein (PotD).

It localises to the cell membrane. The catalysed reaction is ATP + H2O + polyamine-[polyamine-binding protein]Side 1 = ADP + phosphate + polyamineSide 2 + [polyamine-binding protein]Side 1.. Its function is as follows. Part of the ABC transporter complex PotABCD involved in spermidine/putrescine import. Responsible for energy coupling to the transport system. This is Spermidine/putrescine import ATP-binding protein PotA from Streptococcus sanguinis (strain SK36).